Consider the following 598-residue polypeptide: Elongation factor 4 (598 aa).

The tr-type G domain occupies 2–184 (DHIRNFSIIA…AIVKRVPPPR (183 aa)). GTP is bound by residues 14 to 19 (DHGKST) and 131 to 134 (NKID).

It belongs to the TRAFAC class translation factor GTPase superfamily. Classic translation factor GTPase family. LepA subfamily.

It is found in the cell inner membrane. It catalyses the reaction GTP + H2O = GDP + phosphate + H(+). Functionally, required for accurate and efficient protein synthesis under certain stress conditions. May act as a fidelity factor of the translation reaction, by catalyzing a one-codon backward translocation of tRNAs on improperly translocated ribosomes. Back-translocation proceeds from a post-translocation (POST) complex to a pre-translocation (PRE) complex, thus giving elongation factor G a second chance to translocate the tRNAs correctly. Binds to ribosomes in a GTP-dependent manner. The protein is Elongation factor 4 of Syntrophus aciditrophicus (strain SB).